The sequence spans 348 residues: Phosphate acyltransferase (348 aa).

Belongs to the PlsX family. Homodimer. Probably interacts with PlsY.

The protein resides in the cytoplasm. It carries out the reaction a fatty acyl-[ACP] + phosphate = an acyl phosphate + holo-[ACP]. The protein operates within lipid metabolism; phospholipid metabolism. Catalyzes the reversible formation of acyl-phosphate (acyl-PO(4)) from acyl-[acyl-carrier-protein] (acyl-ACP). This enzyme utilizes acyl-ACP as fatty acyl donor, but not acyl-CoA. In Lactiplantibacillus plantarum (strain ATCC BAA-793 / NCIMB 8826 / WCFS1) (Lactobacillus plantarum), this protein is Phosphate acyltransferase.